The sequence spans 814 residues: MASFPESDFQLCPLCKEMCVSTSSSSAGSAGGGTGLASAPPRRLHVLPCLHAFCRQCLEGRRSPGDSLQLRCPVCDHKVLISEAGMDALPSSTFLHLSNLLDAVVGAADEQQQSNGGRTASNRQRSASCSSSGLLRRAPPSQSEPRCSSCDDGNGASSHCLDCQENLCDNCLRAHQRVRLTKDHFIERFPASPCSSAASSAATTSSSSSSAFSLLPVYPERLYCQQHDEEVLHFYCDSCSVPICRECTMGRHAGHSFVYLQEALQDSRALTIQLLADAQQGRQAIQLSLEQAQALAEQVEMKAKVVQSEIKAVTSRHKKALEERECELLWKVEKIRQVKAKSLYHQVEKLHQALNKLDSTINAVQQVLEEGCTMDILIARDRVLAQVQDVKNARGLLQLQEDDRIMFTPPDQALYLAIKSLGLVSSGAFAALTKATGEGLKRALQGKVASFTVIGYDHDGEARLSGGDLITVLVMGPDGNLFAAEVSDQLNGTYLVSYRPQLEGEHLISVMVCNQHIENSPFKVNVKSGRCYLGIGLPTLSFGGEGDHDGKLCRPWGVCVDREGYIIVADRSNNRVQIFKPCGTFHHKFGSLGSRPGQFDRPAGVACDNSRRIVVADKDNHRVQIFTFEGQFLLKFGEKGTKNGQFNYPWDVAVNSEGKILVSDTRNHRVQLFGPDGTFLNKYGFEGALWKHFDSPRGVAFSQDGYLVVTDFNNHRLLIIKPDCQSAHFLGTEGTGNGQFLRPQGVAVDQEGRIIVADSRNHRVQIFEPNGSFLCKFGTQGSGFGQMDRPSGIAVTPDGTIVVVDFGNNRILAF.

The segment at 12–76 (CPLCKEMCVS…SLQLRCPVCD (65 aa)) adopts an RING-type zinc-finger fold. A disordered region spans residues 111–146 (QQQSNGGRTASNRQRSASCSSSGLLRRAPPSQSEPR). Positions 120 to 138 (ASNRQRSASCSSSGLLRRA) are enriched in low complexity. The segment at 142 to 189 (QSEPRCSSCDDGNGASSHCLDCQENLCDNCLRAHQRVRLTKDHFIERF) adopts a B box-type 1; atypical zinc-finger fold. Residues Cys-147, Cys-150, Cys-171, His-175, Cys-224, His-227, Cys-247, and His-252 each coordinate Zn(2+). The B box-type 2 zinc-finger motif lies at 219 to 260 (PERLYCQQHDEEVLHFYCDSCSVPICRECTMGRHAGHSFVYL). Residues 282–370 (RQAIQLSLEQ…INAVQQVLEE (89 aa)) are a coiled coil. The stretch at 425–526 (SSGAFAALTK…IENSPFKVNV (102 aa)) is one Filamin repeat. NHL repeat units follow at residues 539 to 582 (TLSF…FKPC), 586 to 629 (HHKF…FTFE), 633 to 676 (LLKF…FGPD), 680 to 723 (LNKY…IKPD), 727 to 770 (AHFL…FEPN), and 774 to 814 (LCKF…ILAF).

Belongs to the TRIM/RBCC family.

The protein localises to the cytoplasm. The protein resides in the P-body. The enzyme catalyses S-ubiquitinyl-[E2 ubiquitin-conjugating enzyme]-L-cysteine + [acceptor protein]-L-lysine = [E2 ubiquitin-conjugating enzyme]-L-cysteine + N(6)-ubiquitinyl-[acceptor protein]-L-lysine.. The protein operates within protein modification; protein ubiquitination. Its function is as follows. E3 ubiquitin-protein ligase that cooperates with the microRNAs (miRNAs) machinery and promotes embryonic stem cells proliferation and maintenance. Binds to miRNAs and participates in post-transcriptional repression of transcripts. Required to maintain proliferation and prevent premature differentiation of neural progenitor cells during early neural development. The sequence is that of E3 ubiquitin-protein ligase TRIM71 (trim71) from Xenopus tropicalis (Western clawed frog).